A 197-amino-acid polypeptide reads, in one-letter code: Small ribosomal subunit protein uS4c (197 aa).

Positions 92-153 (MRLDAVVYRL…APIVEHAKTF (62 aa)) constitute an S4 RNA-binding domain.

This sequence belongs to the universal ribosomal protein uS4 family. In terms of assembly, part of the 30S ribosomal subunit. Contacts protein S5. The interaction surface between S4 and S5 is involved in control of translational fidelity.

Its subcellular location is the plastid. The protein localises to the chloroplast. Functionally, one of the primary rRNA binding proteins, it binds directly to 16S rRNA where it nucleates assembly of the body of the 30S subunit. Its function is as follows. With S5 and S12 plays an important role in translational accuracy. This chain is Small ribosomal subunit protein uS4c (rps4), found in Ostreococcus tauri.